The primary structure comprises 473 residues: Photosystem II CP43 reaction center protein (473 aa).

Residues 1–14 (MKTLYSLRRFYPVE) constitute a propeptide that is removed on maturation. T15 is subject to N-acetylthreonine. T15 carries the post-translational modification Phosphothreonine. Transmembrane regions (helical) follow at residues 69–93 (LFEV…PHLA), 134–155 (LLGP…KDRN), 178–200 (KALY…RKIT), 255–275 (KPFA…LSYS), and 291–312 (WFNN…ASQA). [CaMn4O5] cluster is bound at residue E367. The chain crosses the membrane as a helical span at residues 447 to 471 (RARAAAAGFEKGIDRDFEPVLSMTP).

This sequence belongs to the PsbB/PsbC family. PsbC subfamily. PSII is composed of 1 copy each of membrane proteins PsbA, PsbB, PsbC, PsbD, PsbE, PsbF, PsbH, PsbI, PsbJ, PsbK, PsbL, PsbM, PsbT, PsbX, PsbY, PsbZ, Psb30/Ycf12, at least 3 peripheral proteins of the oxygen-evolving complex and a large number of cofactors. It forms dimeric complexes. It depends on Binds multiple chlorophylls and provides some of the ligands for the Ca-4Mn-5O cluster of the oxygen-evolving complex. It may also provide a ligand for a Cl- that is required for oxygen evolution. PSII binds additional chlorophylls, carotenoids and specific lipids. as a cofactor.

The protein localises to the plastid. It localises to the chloroplast thylakoid membrane. In terms of biological role, one of the components of the core complex of photosystem II (PSII). It binds chlorophyll and helps catalyze the primary light-induced photochemical processes of PSII. PSII is a light-driven water:plastoquinone oxidoreductase, using light energy to abstract electrons from H(2)O, generating O(2) and a proton gradient subsequently used for ATP formation. This is Photosystem II CP43 reaction center protein from Liriodendron tulipifera (Tuliptree).